The chain runs to 177 residues: ATP synthase subunit delta (177 aa).

Belongs to the ATPase delta chain family. In terms of assembly, F-type ATPases have 2 components, F(1) - the catalytic core - and F(0) - the membrane proton channel. F(1) has five subunits: alpha(3), beta(3), gamma(1), delta(1), epsilon(1). F(0) has three main subunits: a(1), b(2) and c(10-14). The alpha and beta chains form an alternating ring which encloses part of the gamma chain. F(1) is attached to F(0) by a central stalk formed by the gamma and epsilon chains, while a peripheral stalk is formed by the delta and b chains.

It localises to the cell membrane. Functionally, f(1)F(0) ATP synthase produces ATP from ADP in the presence of a proton or sodium gradient. F-type ATPases consist of two structural domains, F(1) containing the extramembraneous catalytic core and F(0) containing the membrane proton channel, linked together by a central stalk and a peripheral stalk. During catalysis, ATP synthesis in the catalytic domain of F(1) is coupled via a rotary mechanism of the central stalk subunits to proton translocation. In terms of biological role, this protein is part of the stalk that links CF(0) to CF(1). It either transmits conformational changes from CF(0) to CF(1) or is implicated in proton conduction. The sequence is that of ATP synthase subunit delta from Caldanaerobacter subterraneus subsp. tengcongensis (strain DSM 15242 / JCM 11007 / NBRC 100824 / MB4) (Thermoanaerobacter tengcongensis).